Reading from the N-terminus, the 142-residue chain is Large ribosomal subunit protein uL11 (142 aa).

The protein belongs to the universal ribosomal protein uL11 family. In terms of assembly, part of the ribosomal stalk of the 50S ribosomal subunit. Interacts with L10 and the large rRNA to form the base of the stalk. L10 forms an elongated spine to which L12 dimers bind in a sequential fashion forming a multimeric L10(L12)X complex. In terms of processing, one or more lysine residues are methylated.

Its function is as follows. Forms part of the ribosomal stalk which helps the ribosome interact with GTP-bound translation factors. This chain is Large ribosomal subunit protein uL11, found in Vibrio cholerae serotype O1 (strain ATCC 39541 / Classical Ogawa 395 / O395).